A 160-amino-acid polypeptide reads, in one-letter code: Lymphocyte antigen 96 (160 aa).

The first 16 residues, 1 to 16 (MFPFMLFSTLFSSIFT), serve as a signal peptide directing secretion. Intrachain disulfides connect cysteine 25–cysteine 51, cysteine 37–cysteine 148, and cysteine 95–cysteine 105. An N-linked (GlcNAc...) asparagine glycan is attached at asparagine 26. The N-linked (GlcNAc...) asparagine glycan is linked to asparagine 114. The segment at 119 to 123 (FSFQG) is interaction with lipopolysaccharide. N-linked (GlcNAc...) asparagine glycosylation occurs at asparagine 150.

Heterogeneous homomer formed from homodimers; disulfide-linked. Belongs to the lipopolysaccharide (LPS) receptor, a multi-protein complex containing at least CD14, LY96 and TLR4. Binds to the extracellular domains of TLR2 and TLR4. Ligand binding induces interaction with TLR4 and oligomerization of the complex. Post-translationally, N-glycosylated.

It localises to the secreted. Its subcellular location is the extracellular space. Binds bacterial lipopolysaccharide (LPS). Cooperates with TLR4 in the innate immune response to bacterial lipopolysaccharide (LPS), and with TLR2 in the response to cell wall components from Gram-positive and Gram-negative bacteria. Enhances TLR4-dependent activation of NF-kappa-B. Cells expressing both LY96 and TLR4, but not TLR4 alone, respond to LPS. This is Lymphocyte antigen 96 (LY96) from Bos taurus (Bovine).